Consider the following 278-residue polypeptide: MTFNDRIAELRDRVRQQRPLIHHITNFVVMNDTANVTLHIGGLPVMAHDREEVAEMVAAAGALVLNVGTLSPDWIEAMIIAGKRANELGIPIVLDPVGAGATSLRTSSNRRLLETLQVAVIRGNSGEIGALAGMGGVVKGVEAVVEADDPLAAAQVLARQYHTVVAVTGRRDLVTDGSRVLAVDNGHEWLKTLTGTGCSATTVIAAFTAVERDYLFAAAAGLACFGLAAELAAPQARGPASFKVAFYDAIYHLAADQIRAGARVVDLSTEQSKAVAQS.

A substrate-binding site is contributed by Met-46. ATP contacts are provided by Arg-122 and Thr-168. Gly-195 is a binding site for substrate.

This sequence belongs to the Thz kinase family. It depends on Mg(2+) as a cofactor.

It catalyses the reaction 5-(2-hydroxyethyl)-4-methylthiazole + ATP = 4-methyl-5-(2-phosphooxyethyl)-thiazole + ADP + H(+). Its pathway is cofactor biosynthesis; thiamine diphosphate biosynthesis; 4-methyl-5-(2-phosphoethyl)-thiazole from 5-(2-hydroxyethyl)-4-methylthiazole: step 1/1. In terms of biological role, catalyzes the phosphorylation of the hydroxyl group of 4-methyl-5-beta-hydroxyethylthiazole (THZ). This is Hydroxyethylthiazole kinase from Chloroflexus aggregans (strain MD-66 / DSM 9485).